Consider the following 1937-residue polypeptide: Myosin-2 (1937 aa).

The Myosin N-terminal SH3-like domain occupies 33-82; it reads DAKTSVFVAEPKESFVKGTIQSREGGKVTVKTDAGATLTVKEDQVFPMNP. Phosphothreonine is present on residues threonine 64 and threonine 69. In terms of domain architecture, Myosin motor spans 86–780; that stretch reads DKIEDMAMMT…LLGLLEEMRD (695 aa). At lysine 130 the chain carries N6,N6,N6-trimethyllysine. ATP is bound at residue 179 to 186; the sequence is GESGAGKT. Position 387 is a phosphotyrosine (tyrosine 387). Residue threonine 417 is modified to Phosphothreonine. Phosphoserine is present on serine 623. An actin-binding region spans residues 657–679; sequence LNKLMTNLRSTHPHFVRCIIPNE. Histidine 755 carries the post-translational modification Pros-methylhistidine. The tract at residues 759–773 is actin-binding; sequence KFGHTKVFFKAGLLG. An IQ domain is found at 783 to 812; it reads LAQIITRTQARCRGFLARVEYQKMVERRES. A coiled-coil region spans residues 841-1937; the sequence is LLKSAETEKE…EVHTKIISEE (1097 aa). A Phosphoserine modification is found at serine 1094. Disordered regions lie at residues 1124 to 1145 and 1151 to 1170; these read IEAERASRAKAEKQRSDLSREL and RLEEAGGATSAQIEMNKKRE. A compositionally biased stretch (basic and acidic residues) spans 1126–1145; that stretch reads AERASRAKAEKQRSDLSREL. 2 positions are modified to phosphoserine: serine 1160 and serine 1235. At threonine 1239 the chain carries Phosphothreonine. Serine 1241 carries the post-translational modification Phosphoserine. Threonine 1253 bears the Phosphothreonine mark. At serine 1259 the chain carries Phosphoserine. Threonine 1284 is subject to Phosphothreonine. Phosphoserine is present on residues serine 1290, serine 1301, and serine 1304. At tyrosine 1462 the chain carries Phosphotyrosine. At threonine 1465 the chain carries Phosphothreonine. Serine 1472 carries the post-translational modification Phosphoserine. Phosphotyrosine is present on tyrosine 1490. Serine 1493 bears the Phosphoserine mark. The residue at position 1499 (threonine 1499) is a Phosphothreonine. Serine 1512 is modified (phosphoserine). Phosphothreonine is present on threonine 1515. Phosphoserine occurs at positions 1540, 1552, 1572, 1712, and 1724. 2 positions are modified to phosphothreonine: threonine 1728 and threonine 1734. Serine 1737 carries the post-translational modification Phosphoserine. The disordered stretch occupies residues 1883-1913; sequence QAEEAEEQSNTNLSKFRKLQHELEEAEERAD.

It belongs to the TRAFAC class myosin-kinesin ATPase superfamily. Myosin family. Muscle myosin is a hexameric protein that consists of 2 heavy chain subunits (MHC), 2 alkali light chain subunits (MLC) and 2 regulatory light chain subunits (MLC-2). Interacts with GCSAM.

It is found in the cytoplasm. It localises to the myofibril. Its function is as follows. Myosins are actin-based motor molecules with ATPase activity essential for muscle contraction. The chain is Myosin-2 (MYH2) from Equus caballus (Horse).